We begin with the raw amino-acid sequence, 252 residues long: N-acetylglucosaminyl-phosphatidylinositol de-N-acetylase (252 aa).

A helical transmembrane segment spans residues 2–22 (ELVGFLCVAVAVLTWGFLRVW). The Cytoplasmic portion of the chain corresponds to 23-252 (NSAERMRSPE…YMRINSLRFL (230 aa)).

The protein belongs to the PIGL family.

The protein localises to the endoplasmic reticulum membrane. The enzyme catalyses a 6-(N-acetyl-alpha-D-glucosaminyl)-1-(1,2-diacyl-sn-glycero-3-phospho)-1D-myo-inositol + H2O = a 6-(alpha-D-glucosaminyl)-1-(1,2-diacyl-sn-glycero-3-phospho)-1D-myo-inositol + acetate. It participates in glycolipid biosynthesis; glycosylphosphatidylinositol-anchor biosynthesis. In terms of biological role, catalyzes the second step of glycosylphosphatidylinositol (GPI) biosynthesis, which is the de-N-acetylation of N-acetylglucosaminyl-phosphatidylinositol. This Mus musculus (Mouse) protein is N-acetylglucosaminyl-phosphatidylinositol de-N-acetylase (Pigl).